A 159-amino-acid polypeptide reads, in one-letter code: Peripheral myelin protein 22 (159 aa).

Residue Met-1 is a topological domain, cytoplasmic. Residues 2–31 form a helical membrane-spanning segment; the sequence is LLLLLGIIVLHVAVLVLLFVATIVSQWIVG. Residues 32–64 are Extracellular-facing; the sequence is NGHATDLWQNCSTTSGNVQHCLSSSANEWLQSV. Asn-41 carries an N-linked (GlcNAc...) asparagine glycan. A helical transmembrane segment spans residues 65–91; the sequence is QATMILSIIFSVLSLFLFFCQLFTLTK. Over 92 to 95 the chain is Cytoplasmic; sequence GGRF. Residues 96–119 traverse the membrane as a helical segment; that stretch reads YITGIFQILAGLCVMSAASIYTVR. Residues 120–133 are Extracellular-facing; the sequence is HPEWHLDSAYSYGF. A helical transmembrane segment spans residues 134–156; that stretch reads AYILAWVAFPLALLSGVVYVILR. Over 157-159 the chain is Cytoplasmic; it reads KRE.

This sequence belongs to the PMP-22/EMP/MP20 family. Ubiquitinated by the DCX(DCAF13) E3 ubiquitin ligase complex, leading to its degradation.

Its subcellular location is the cell membrane. Might be involved in growth regulation, and in myelinization in the peripheral nervous system. The protein is Peripheral myelin protein 22 (PMP22) of Equus caballus (Horse).